A 379-amino-acid polypeptide reads, in one-letter code: Probable pectin lyase A (379 aa).

The signal sequence occupies residues 1–20; that stretch reads MKYSTIFSAAAAVFAGSAAA. 2 disulfides stabilise this stretch: Cys-83–Cys-102 and Cys-92–Cys-226. Asn-129 is a glycosylation site (N-linked (GlcNAc...) asparagine). Residue Arg-256 is part of the active site. Cys-322 and Cys-330 are disulfide-bonded.

It belongs to the polysaccharide lyase 1 family.

Its subcellular location is the secreted. The enzyme catalyses Eliminative cleavage of (1-&gt;4)-alpha-D-galacturonan methyl ester to give oligosaccharides with 4-deoxy-6-O-methyl-alpha-D-galact-4-enuronosyl groups at their non-reducing ends.. Functionally, pectinolytic enzymes consist of four classes of enzymes: pectin lyase, polygalacturonase, pectin methylesterase and rhamnogalacturonase. Among pectinolytic enzymes, pectin lyase is the most important in depolymerization of pectin, since it cleaves internal glycosidic bonds of highly methylated pectins. The sequence is that of Probable pectin lyase A (pelA) from Aspergillus niger (strain ATCC MYA-4892 / CBS 513.88 / FGSC A1513).